A 1137-amino-acid chain; its full sequence is Otoancorin (1137 aa).

An N-terminal signal peptide occupies residues 1–23; the sequence is MSQGPRTCSLLLVLLLSHGGAYQ. N-linked (GlcNAc...) asparagine glycosylation is found at Asn156, Asn211, Asn244, Asn289, Asn321, Asn380, Asn384, Asn530, Asn594, Asn740, and Asn798. Over residues 1095–1115 the composition is skewed to polar residues; sequence HSWQTDPLSSSPTWPASTGSP. The tract at residues 1095 to 1119 is disordered; the sequence is HSWQTDPLSSSPTWPASTGSPTGEP. Gly1113 is lipidated: GPI-anchor amidated glycine. The propeptide at 1114–1137 is removed in mature form; sequence SPTGEPASQALWLGCTLLLLTAKS.

It belongs to the stereocilin family. In terms of tissue distribution, expressed in the inner ear and vestibule.

It is found in the apical cell membrane. The protein localises to the secreted. Its subcellular location is the extracellular space. It localises to the extracellular matrix. Functionally, may act as an adhesion molecule. This Mus musculus (Mouse) protein is Otoancorin (Otoa).